We begin with the raw amino-acid sequence, 539 residues long: GMP synthase [glutamine-hydrolyzing] (539 aa).

The Glutamine amidotransferase type-1 domain maps to 4–202; that stretch reads KILILDFGSQ…VLQIAGCKPD (199 aa). Cysteine 81 functions as the Nucleophile in the catalytic mechanism. Residues histidine 176 and glutamate 178 contribute to the active site. The 193-residue stretch at 203–395 folds into the GMPS ATP-PPase domain; sequence WVMRDHIEEA…LGLPPEMVYR (193 aa). 230 to 236 contributes to the ATP binding site; sequence SGGVDSS.

Homodimer.

The catalysed reaction is XMP + L-glutamine + ATP + H2O = GMP + L-glutamate + AMP + diphosphate + 2 H(+). It functions in the pathway purine metabolism; GMP biosynthesis; GMP from XMP (L-Gln route): step 1/1. In terms of biological role, catalyzes the synthesis of GMP from XMP. This Cupriavidus taiwanensis (strain DSM 17343 / BCRC 17206 / CCUG 44338 / CIP 107171 / LMG 19424 / R1) (Ralstonia taiwanensis (strain LMG 19424)) protein is GMP synthase [glutamine-hydrolyzing].